A 628-amino-acid polypeptide reads, in one-letter code: Protein SDS23 (628 aa).

Residues 1–126 (MVNPPQPRQM…NKSSSQSIAP (126 aa)) are disordered. Over residues 15–24 (RLSTSTSSGP) the composition is skewed to polar residues. Composition is skewed to low complexity over residues 40-71 (QLQH…PGST) and 109-123 (SRHA…SSQS). CBS domains lie at 258-319 (LHPK…RFPS) and 334-392 (GSSN…SHLL). The disordered stretch occupies residues 551-609 (GRRTDPQAARNQRRRSSTSTTRSSIDSALSAEGILPSGSAIIGSSNAANTGRRGSVEVS). Positions 587–599 (SGSAIIGSSNAAN) are enriched in low complexity.

It belongs to the SDS23 family.

The protein resides in the cytoplasm. The protein localises to the nucleus. Its function is as follows. Involved in DNA replication and cell separation. The chain is Protein SDS23 (SDS24) from Candida albicans (strain SC5314 / ATCC MYA-2876) (Yeast).